The following is a 328-amino-acid chain: D-cysteine desulfhydrase (328 aa).

At K51 the chain carries N6-(pyridoxal phosphate)lysine.

It belongs to the ACC deaminase/D-cysteine desulfhydrase family. In terms of assembly, homodimer. The cofactor is pyridoxal 5'-phosphate.

It catalyses the reaction D-cysteine + H2O = hydrogen sulfide + pyruvate + NH4(+) + H(+). Catalyzes the alpha,beta-elimination reaction of D-cysteine and of several D-cysteine derivatives. It could be a defense mechanism against D-cysteine. The sequence is that of D-cysteine desulfhydrase from Escherichia coli O157:H7.